The primary structure comprises 1171 residues: DNA-directed RNA polymerase subunit beta (1171 aa).

Belongs to the RNA polymerase beta chain family. In terms of assembly, the RNAP catalytic core consists of 2 alpha, 1 beta, 1 beta' and 1 omega subunit. When a sigma factor is associated with the core the holoenzyme is formed, which can initiate transcription.

The catalysed reaction is RNA(n) + a ribonucleoside 5'-triphosphate = RNA(n+1) + diphosphate. DNA-dependent RNA polymerase catalyzes the transcription of DNA into RNA using the four ribonucleoside triphosphates as substrates. In Arthrobacter sp. (strain FB24), this protein is DNA-directed RNA polymerase subunit beta.